The primary structure comprises 391 residues: uncharacterized protein (391 aa).

One can recognise an OBG-type G domain in the interval Ala-85–Gly-314. GTP is bound by residues Gly-91–Ser-98, Asp-137–Ile-141, and Asn-267–Asp-270. Residues Gly-314–Ile-389 enclose the TGS domain.

The protein belongs to the TRAFAC class OBG-HflX-like GTPase superfamily. OBG GTPase family.

This is an uncharacterized protein from Methanocaldococcus jannaschii (strain ATCC 43067 / DSM 2661 / JAL-1 / JCM 10045 / NBRC 100440) (Methanococcus jannaschii).